We begin with the raw amino-acid sequence, 348 residues long: Ketol-acid reductoisomerase (NADP(+)) (348 aa).

Residues 2-182 (AKTYYDHDAD…GCTRAGVLET (181 aa)) enclose the KARI N-terminal Rossmann domain. Residues 25 to 28 (YGSQ), S51, S53, and 83 to 86 (DTAQ) contribute to the NADP(+) site. H108 is an active-site residue. Residue G134 participates in NADP(+) binding. Residues 183 to 328 (TFKEETETDL…EKLRAAMPFL (146 aa)) enclose the KARI C-terminal knotted domain. Residues D191, E195, E227, and E231 each contribute to the Mg(2+) site. Residue S252 coordinates substrate.

Belongs to the ketol-acid reductoisomerase family. Requires Mg(2+) as cofactor.

The catalysed reaction is (2R)-2,3-dihydroxy-3-methylbutanoate + NADP(+) = (2S)-2-acetolactate + NADPH + H(+). It carries out the reaction (2R,3R)-2,3-dihydroxy-3-methylpentanoate + NADP(+) = (S)-2-ethyl-2-hydroxy-3-oxobutanoate + NADPH + H(+). It functions in the pathway amino-acid biosynthesis; L-isoleucine biosynthesis; L-isoleucine from 2-oxobutanoate: step 2/4. It participates in amino-acid biosynthesis; L-valine biosynthesis; L-valine from pyruvate: step 2/4. Its function is as follows. Involved in the biosynthesis of branched-chain amino acids (BCAA). Catalyzes an alkyl-migration followed by a ketol-acid reduction of (S)-2-acetolactate (S2AL) to yield (R)-2,3-dihydroxy-isovalerate. In the isomerase reaction, S2AL is rearranged via a Mg-dependent methyl migration to produce 3-hydroxy-3-methyl-2-ketobutyrate (HMKB). In the reductase reaction, this 2-ketoacid undergoes a metal-dependent reduction by NADPH to yield (R)-2,3-dihydroxy-isovalerate. This Acidobacterium capsulatum (strain ATCC 51196 / DSM 11244 / BCRC 80197 / JCM 7670 / NBRC 15755 / NCIMB 13165 / 161) protein is Ketol-acid reductoisomerase (NADP(+)).